The sequence spans 266 residues: Leucine-rich repeat-containing protein 3 (266 aa).

An N-terminal signal peptide occupies residues Met-1–Ala-38. The LRRNT domain maps to Cys-39 to His-70. 3 LRR repeats span residues Asp-71 to Asn-92, Trp-95 to Gly-116, and Ser-120 to Arg-141. The LRRCT domain maps to Asn-151–Phe-204. The helical transmembrane segment at Val-211–Tyr-231 threads the bilayer.

The protein belongs to the LRRC3 family.

It localises to the membrane. The sequence is that of Leucine-rich repeat-containing protein 3 (lrrc3) from Danio rerio (Zebrafish).